The sequence spans 461 residues: UDP-N-acetylmuramate--L-alanine ligase (461 aa).

Gly112 to Thr118 serves as a coordination point for ATP.

Belongs to the MurCDEF family.

The protein resides in the cytoplasm. The catalysed reaction is UDP-N-acetyl-alpha-D-muramate + L-alanine + ATP = UDP-N-acetyl-alpha-D-muramoyl-L-alanine + ADP + phosphate + H(+). Its pathway is cell wall biogenesis; peptidoglycan biosynthesis. Functionally, cell wall formation. In Geobacter sp. (strain M21), this protein is UDP-N-acetylmuramate--L-alanine ligase.